A 156-amino-acid chain; its full sequence is Small ribosomal subunit protein uS7 (156 aa).

This sequence belongs to the universal ribosomal protein uS7 family. In terms of assembly, part of the 30S ribosomal subunit. Contacts proteins S9 and S11.

Its function is as follows. One of the primary rRNA binding proteins, it binds directly to 16S rRNA where it nucleates assembly of the head domain of the 30S subunit. Is located at the subunit interface close to the decoding center, probably blocks exit of the E-site tRNA. This Desulforudis audaxviator (strain MP104C) protein is Small ribosomal subunit protein uS7.